Here is a 142-residue protein sequence, read N- to C-terminus: Large ribosomal subunit protein uL11 (142 aa).

This sequence belongs to the universal ribosomal protein uL11 family. As to quaternary structure, part of the ribosomal stalk of the 50S ribosomal subunit. Interacts with L10 and the large rRNA to form the base of the stalk. L10 forms an elongated spine to which L12 dimers bind in a sequential fashion forming a multimeric L10(L12)X complex. In terms of processing, one or more lysine residues are methylated.

Forms part of the ribosomal stalk which helps the ribosome interact with GTP-bound translation factors. In Lachnoclostridium phytofermentans (strain ATCC 700394 / DSM 18823 / ISDg) (Clostridium phytofermentans), this protein is Large ribosomal subunit protein uL11.